The following is a 65-amino-acid chain: Large ribosomal subunit protein bL33m (65 aa).

A mitochondrion-targeting transit peptide spans 1 to 8; it reads MLLSAVSF.

It belongs to the bacterial ribosomal protein bL33 family. As to quaternary structure, component of the mitochondrial ribosome large subunit (39S) which comprises a 16S rRNA and about 50 distinct proteins.

The protein localises to the mitochondrion. The chain is Large ribosomal subunit protein bL33m (Mrpl33) from Mus musculus (Mouse).